Reading from the N-terminus, the 491-residue chain is Lysine--tRNA ligase (491 aa).

Mg(2+)-binding residues include E399 and E406.

It belongs to the class-II aminoacyl-tRNA synthetase family. Homodimer. Mg(2+) is required as a cofactor.

The protein localises to the cytoplasm. The enzyme catalyses tRNA(Lys) + L-lysine + ATP = L-lysyl-tRNA(Lys) + AMP + diphosphate. The protein is Lysine--tRNA ligase of Chloroflexus aurantiacus (strain ATCC 29366 / DSM 635 / J-10-fl).